A 450-amino-acid polypeptide reads, in one-letter code: Glucose-6-phosphate isomerase (450 aa).

Thr-39 is subject to Phosphothreonine. Glu-291 (proton donor) is an active-site residue. Active-site residues include His-312 and Lys-426.

It belongs to the GPI family.

Its subcellular location is the cytoplasm. The enzyme catalyses alpha-D-glucose 6-phosphate = beta-D-fructose 6-phosphate. The protein operates within carbohydrate biosynthesis; gluconeogenesis. Its pathway is carbohydrate degradation; glycolysis; D-glyceraldehyde 3-phosphate and glycerone phosphate from D-glucose: step 2/4. Its function is as follows. Catalyzes the reversible isomerization of glucose-6-phosphate to fructose-6-phosphate. The protein is Glucose-6-phosphate isomerase of Bacillus anthracis.